Consider the following 127-residue polypeptide: Mitochondrial pyruvate carrier 2 (127 aa).

At 2 to 40 (SAAGARGLRATYHRLLDKVELMLPEKLRPLYNHPAGPRT) the chain is on the mitochondrial matrix side. A helical transmembrane segment spans residues 41-61 (VFFWAPIMKWGLVCAGLADMA). Over 62–72 (RPAEKLSTAQS) the chain is Mitochondrial intermembrane. The chain crosses the membrane as a helical span at residues 73–90 (AVLMATGFIWSRYSLVII). Over 91-95 (PKNWS) the chain is Mitochondrial matrix. Residues 96–115 (LFAVNFFVGAAGASQLFRIW) form a helical membrane-spanning segment. The Mitochondrial intermembrane portion of the chain corresponds to 116–127 (RYNQELKAKAHK).

The protein belongs to the mitochondrial pyruvate carrier (MPC) (TC 2.A.105) family. As to quaternary structure, homodimer. Homooligomer. Forms heterodimers with MPC1 and MPC1L. The heterodimer is the more stable and dominant form.

It is found in the mitochondrion inner membrane. It carries out the reaction pyruvate(out) + H(+)(out) = pyruvate(in) + H(+)(in). Mediates the uptake of pyruvate into mitochondria. The sequence is that of Mitochondrial pyruvate carrier 2 (MPC2) from Homo sapiens (Human).